Reading from the N-terminus, the 491-residue chain is Protein OrfX3 (491 aa).

The protein belongs to the TULIP P47 family. As to quaternary structure, heterodimer of OrfX1 and OrfX3; crystallizes as a dimer of heterodimers.

Functionally, expression of the ptox operon (ntnh-orfX1-orfX2-orfX3-pmp1) in B.thuringiensis kills Anopheles but not Aedes mosquito 3rd instar larvae. The ntnh-pmp1 construct is about half as toxic. The protein is Protein OrfX3 of Paraclostridium bifermentans (Clostridium bifermentans).